We begin with the raw amino-acid sequence, 340 residues long: L-threonine 3-dehydrogenase (340 aa).

Cys-38 is a binding site for Zn(2+). Active-site charge relay system residues include Thr-40 and His-43. Residues His-63, Glu-64, Cys-93, Cys-96, Cys-99, and Cys-107 each contribute to the Zn(2+) site. Residues Ile-175, Asp-195, Arg-200, 261–263, and 285–286 contribute to the NAD(+) site; these read LGI and IY.

It belongs to the zinc-containing alcohol dehydrogenase family. In terms of assembly, homotetramer. It depends on Zn(2+) as a cofactor.

Its subcellular location is the cytoplasm. The catalysed reaction is L-threonine + NAD(+) = (2S)-2-amino-3-oxobutanoate + NADH + H(+). The protein operates within amino-acid degradation; L-threonine degradation via oxydo-reductase pathway; glycine from L-threonine: step 1/2. Functionally, catalyzes the NAD(+)-dependent oxidation of L-threonine to 2-amino-3-ketobutyrate. The polypeptide is L-threonine 3-dehydrogenase (Xanthomonas campestris pv. campestris (strain ATCC 33913 / DSM 3586 / NCPPB 528 / LMG 568 / P 25)).